Reading from the N-terminus, the 142-residue chain is Acidic phospholipase A2 KBf-grIB (142 aa).

Cystine bridges form between Cys-28–Cys-94, Cys-44–Cys-141, Cys-46–Cys-62, Cys-61–Cys-122, Cys-68–Cys-115, Cys-78–Cys-108, and Cys-101–Cys-113. Ca(2+)-binding residues include Tyr-45, Gly-47, and Gly-49. Residue His-65 is part of the active site. Asp-66 is a binding site for Ca(2+). Asp-116 is a catalytic residue.

This sequence belongs to the phospholipase A2 family. Group I subfamily. D49 sub-subfamily. The cofactor is Ca(2+). As to expression, expressed by the venom gland.

The protein resides in the secreted. It carries out the reaction a 1,2-diacyl-sn-glycero-3-phosphocholine + H2O = a 1-acyl-sn-glycero-3-phosphocholine + a fatty acid + H(+). In terms of biological role, PLA2 catalyzes the calcium-dependent hydrolysis of the 2-acyl groups in 3-sn-phosphoglycerides. In Bungarus fasciatus (Banded krait), this protein is Acidic phospholipase A2 KBf-grIB.